Consider the following 467-residue polypeptide: Chromosomal replication initiator protein DnaA (467 aa).

The interval 1-90 (MSLSLWQQCL…KPVTQTPQAA (90 aa)) is domain I, interacts with DnaA modulators. A domain II region spans residues 91–130 (VTSNVAAPAQVAQTQPQRAAPSMRSGWDNVPAPAEPTYRS). A domain III, AAA+ region region spans residues 131-347 (NVNVKHTFDN…GALNRVIANA (217 aa)). The ATP site is built by Gly175, Gly177, Lys178, and Thr179. Positions 348–467 (NFTGRAITID…FSNLIRTLSS (120 aa)) are domain IV, binds dsDNA.

It belongs to the DnaA family. Oligomerizes as a right-handed, spiral filament on DNA at oriC.

The protein resides in the cytoplasm. Functionally, plays an essential role in the initiation and regulation of chromosomal replication. ATP-DnaA binds to the origin of replication (oriC) to initiate formation of the DNA replication initiation complex once per cell cycle. Binds the DnaA box (a 9 base pair repeat at the origin) and separates the double-stranded (ds)DNA. Forms a right-handed helical filament on oriC DNA; dsDNA binds to the exterior of the filament while single-stranded (ss)DNA is stabiized in the filament's interior. The ATP-DnaA-oriC complex binds and stabilizes one strand of the AT-rich DNA unwinding element (DUE), permitting loading of DNA polymerase. After initiation quickly degrades to an ADP-DnaA complex that is not apt for DNA replication. Binds acidic phospholipids. In Escherichia coli (strain ATCC 8739 / DSM 1576 / NBRC 3972 / NCIMB 8545 / WDCM 00012 / Crooks), this protein is Chromosomal replication initiator protein DnaA.